The sequence spans 336 residues: Solute-binding protein Csal_2479 (336 aa).

A signal peptide spans Met1–Ala33. Residues His42, Gln80, Arg156, Arg177, Tyr200, Asn217–Asn218, and Glu244 each bind beta-D-glucuronate.

Belongs to the bacterial solute-binding protein 7 family. As to quaternary structure, the complex is comprised of an extracytoplasmic solute-binding protein and a heteromeric permease formed by two transmembrane proteins.

It is found in the periplasm. Functionally, solute-binding protein that binds D-glucuronate (in vitro). Probably part of a tripartite ATP-independent periplasmic (TRAP) transport system that mediates solute transport into the cytoplasm. This Chromohalobacter salexigens (strain ATCC BAA-138 / DSM 3043 / CIP 106854 / NCIMB 13768 / 1H11) protein is Solute-binding protein Csal_2479.